The chain runs to 521 residues: Exodeoxyribonuclease 7 large subunit (521 aa).

Positions 494-521 are disordered; it reads ATSGAARPKPAAKPSTKAKEPGNQGSLF. A compositionally biased stretch (low complexity) spans 498-508; sequence AARPKPAAKPS.

It belongs to the XseA family. Heterooligomer composed of large and small subunits.

It is found in the cytoplasm. The catalysed reaction is Exonucleolytic cleavage in either 5'- to 3'- or 3'- to 5'-direction to yield nucleoside 5'-phosphates.. Bidirectionally degrades single-stranded DNA into large acid-insoluble oligonucleotides, which are then degraded further into small acid-soluble oligonucleotides. In Mesorhizobium japonicum (strain LMG 29417 / CECT 9101 / MAFF 303099) (Mesorhizobium loti (strain MAFF 303099)), this protein is Exodeoxyribonuclease 7 large subunit.